Reading from the N-terminus, the 542-residue chain is CTP synthase (542 aa).

Residues 1-265 are amidoligase domain; sequence MARYVFITGG…DSEVLSAFGI (265 aa). Position 13 (Ser13) interacts with CTP. Residue Ser13 participates in UTP binding. Residue 14 to 19 participates in ATP binding; sequence SLGKGI. Residue Tyr54 coordinates L-glutamine. Asp71 contributes to the ATP binding site. Asp71 and Glu139 together coordinate Mg(2+). CTP-binding positions include 146 to 148, 186 to 191, and Lys222; these read DIE and KTKPTQ. UTP contacts are provided by residues 186–191 and Lys222; that span reads KTKPTQ. The region spanning 291 to 541 is the Glutamine amidotransferase type-1 domain; sequence TIAIVGKYTG…IEAAIEQSRL (251 aa). An L-glutamine-binding site is contributed by Gly353. The active-site Nucleophile; for glutamine hydrolysis is the Cys380. L-glutamine-binding positions include 381–384, Glu404, and Arg469; that span reads FGMQ. Residues His514 and Glu516 contribute to the active site.

Belongs to the CTP synthase family. Homotetramer.

It carries out the reaction UTP + L-glutamine + ATP + H2O = CTP + L-glutamate + ADP + phosphate + 2 H(+). The catalysed reaction is L-glutamine + H2O = L-glutamate + NH4(+). It catalyses the reaction UTP + NH4(+) + ATP = CTP + ADP + phosphate + 2 H(+). Its pathway is pyrimidine metabolism; CTP biosynthesis via de novo pathway; CTP from UDP: step 2/2. Its activity is regulated as follows. Allosterically activated by GTP, when glutamine is the substrate; GTP has no effect on the reaction when ammonia is the substrate. The allosteric effector GTP functions by stabilizing the protein conformation that binds the tetrahedral intermediate(s) formed during glutamine hydrolysis. Inhibited by the product CTP, via allosteric rather than competitive inhibition. Catalyzes the ATP-dependent amination of UTP to CTP with either L-glutamine or ammonia as the source of nitrogen. Regulates intracellular CTP levels through interactions with the four ribonucleotide triphosphates. The chain is CTP synthase from Brucella anthropi (strain ATCC 49188 / DSM 6882 / CCUG 24695 / JCM 21032 / LMG 3331 / NBRC 15819 / NCTC 12168 / Alc 37) (Ochrobactrum anthropi).